The following is a 412-amino-acid chain: Histidine--tRNA ligase (412 aa).

It belongs to the class-II aminoacyl-tRNA synthetase family. In terms of assembly, homodimer.

It localises to the cytoplasm. The enzyme catalyses tRNA(His) + L-histidine + ATP = L-histidyl-tRNA(His) + AMP + diphosphate + H(+). The sequence is that of Histidine--tRNA ligase from Rickettsia typhi (strain ATCC VR-144 / Wilmington).